The chain runs to 398 residues: Phosphoglycerate kinase (398 aa).

Substrate is bound by residues 21 to 23 (DFN), Arg41, 64 to 67 (HLGR), Arg123, and Arg156. ATP contacts are provided by residues Lys207, Gly294, Glu325, and 354–357 (GGDS).

It belongs to the phosphoglycerate kinase family. Monomer.

It localises to the cytoplasm. It carries out the reaction (2R)-3-phosphoglycerate + ATP = (2R)-3-phospho-glyceroyl phosphate + ADP. The protein operates within carbohydrate degradation; glycolysis; pyruvate from D-glyceraldehyde 3-phosphate: step 2/5. The chain is Phosphoglycerate kinase from Salinibacter ruber (strain DSM 13855 / M31).